The primary structure comprises 337 residues: Ketol-acid reductoisomerase (NADP(+)) (337 aa).

The KARI N-terminal Rossmann domain occupies 3 to 183 (VEMFYDDDAD…GGTRAGVIKT (181 aa)). Residues 26–29 (YGSQ), Lys49, Ser52, Ser54, and 84–87 (DTAQ) contribute to the NADP(+) site. The active site involves His109. Gly135 is an NADP(+) binding site. The KARI C-terminal knotted domain occupies 184–329 (TFKEETETDL…KKLRDLMSWV (146 aa)). Positions 192, 196, 228, and 232 each coordinate Mg(2+). Residue Ser253 participates in substrate binding.

This sequence belongs to the ketol-acid reductoisomerase family. Requires Mg(2+) as cofactor.

The catalysed reaction is (2R)-2,3-dihydroxy-3-methylbutanoate + NADP(+) = (2S)-2-acetolactate + NADPH + H(+). It catalyses the reaction (2R,3R)-2,3-dihydroxy-3-methylpentanoate + NADP(+) = (S)-2-ethyl-2-hydroxy-3-oxobutanoate + NADPH + H(+). It functions in the pathway amino-acid biosynthesis; L-isoleucine biosynthesis; L-isoleucine from 2-oxobutanoate: step 2/4. Its pathway is amino-acid biosynthesis; L-valine biosynthesis; L-valine from pyruvate: step 2/4. In terms of biological role, involved in the biosynthesis of branched-chain amino acids (BCAA). Catalyzes an alkyl-migration followed by a ketol-acid reduction of (S)-2-acetolactate (S2AL) to yield (R)-2,3-dihydroxy-isovalerate. In the isomerase reaction, S2AL is rearranged via a Mg-dependent methyl migration to produce 3-hydroxy-3-methyl-2-ketobutyrate (HMKB). In the reductase reaction, this 2-ketoacid undergoes a metal-dependent reduction by NADPH to yield (R)-2,3-dihydroxy-isovalerate. This chain is Ketol-acid reductoisomerase (NADP(+)), found in Rhodococcus jostii (strain RHA1).